Reading from the N-terminus, the 605-residue chain is Sulfite reductase [NADPH] flavoprotein alpha-component (605 aa).

In terms of domain architecture, Flavodoxin-like spans 70-208; it reads LTIIYASQTG…PAAEWRVKAL (139 aa). FMN is bound by residues 76-81, 123-126, and 159-168; these read SQTGNA, STHG, and LGDSSYEFFC. Positions 240–454 constitute an FAD-binding FR-type domain; the sequence is QNPYEATLLT…VEENNNFKLP (215 aa). FAD is bound by residues threonine 328, glycine 362, 392 to 395, 410 to 412, and 425 to 428; these read RLYS, TVG, and GGAS. NADP(+)-binding positions include 525–526, 531–535, and aspartate 567; these read SR and KVYVQ. Tyrosine 605 is an FAD binding site.

This sequence belongs to the NADPH-dependent sulphite reductase flavoprotein subunit CysJ family. It in the N-terminal section; belongs to the flavodoxin family. The protein in the C-terminal section; belongs to the flavoprotein pyridine nucleotide cytochrome reductase family. Alpha(8)-beta(8). The alpha component is a flavoprotein, the beta component is a hemoprotein. FAD serves as cofactor. The cofactor is FMN.

The enzyme catalyses hydrogen sulfide + 3 NADP(+) + 3 H2O = sulfite + 3 NADPH + 4 H(+). It functions in the pathway sulfur metabolism; hydrogen sulfide biosynthesis; hydrogen sulfide from sulfite (NADPH route): step 1/1. Its function is as follows. Component of the sulfite reductase complex that catalyzes the 6-electron reduction of sulfite to sulfide. This is one of several activities required for the biosynthesis of L-cysteine from sulfate. The flavoprotein component catalyzes the electron flow from NADPH -&gt; FAD -&gt; FMN to the hemoprotein component. This Photobacterium profundum (strain SS9) protein is Sulfite reductase [NADPH] flavoprotein alpha-component.